The following is a 166-amino-acid chain: Prorelaxin H2 (166 aa).

The first 5 residues, 1 to 5 (SRAVA), serve as a signal peptide directing secretion. Disulfide bonds link Cys-16-Cys-153, Cys-28-Cys-166, and Cys-152-Cys-157. Residues 37–138 (SLSQEDAPQT…LKYLGLDTHS (102 aa)) constitute a propeptide, connecting peptide.

It belongs to the insulin family. As to quaternary structure, heterodimer of a B chain and an A chain linked by two disulfide bonds. Expressed in the corpus luteum of pregnancy and in the placenta.

It is found in the secreted. Functionally, relaxin is an ovarian hormone that acts with estrogen to produce dilatation of the birth canal in many mammals. May be involved in remodeling of connective tissues during pregnancy, promoting growth of pubic ligaments and ripening of the cervix. This chain is Prorelaxin H2 (RNL2), found in Pan troglodytes (Chimpanzee).